The chain runs to 313 residues: Porphobilinogen deaminase (313 aa).

Cysteine 242 carries the post-translational modification S-(dipyrrolylmethanemethyl)cysteine.

It belongs to the HMBS family. As to quaternary structure, monomer. It depends on dipyrromethane as a cofactor.

The catalysed reaction is 4 porphobilinogen + H2O = hydroxymethylbilane + 4 NH4(+). The protein operates within porphyrin-containing compound metabolism; protoporphyrin-IX biosynthesis; coproporphyrinogen-III from 5-aminolevulinate: step 2/4. Functionally, tetrapolymerization of the monopyrrole PBG into the hydroxymethylbilane pre-uroporphyrinogen in several discrete steps. This chain is Porphobilinogen deaminase, found in Pseudomonas fluorescens (strain Pf0-1).